Reading from the N-terminus, the 468-residue chain is UDP-N-acetylmuramoyl-L-alanine--L-glutamate ligase (468 aa).

122–128 (GTKGKST) is an ATP binding site.

The protein belongs to the MurCDEF family. MurD2 subfamily.

Its subcellular location is the cytoplasm. It carries out the reaction UDP-N-acetyl-alpha-D-muramoyl-L-alanine + L-glutamate + ATP = UDP-N-acetyl-alpha-D-muramoyl-L-alanyl-L-glutamate + ADP + phosphate + H(+). It participates in cell wall biogenesis; peptidoglycan biosynthesis. Functionally, cell wall formation. Catalyzes the addition of L-glutamate to the nucleotide precursor UDP-N-acetylmuramoyl-L-alanine. This Xanthomonas campestris pv. campestris (strain 8004) protein is UDP-N-acetylmuramoyl-L-alanine--L-glutamate ligase.